Here is a 379-residue protein sequence, read N- to C-terminus: Leukocyte elastase inhibitor A (379 aa).

Ser300 carries the post-translational modification Phosphoserine.

It belongs to the serpin family. Ov-serpin subfamily. In terms of assembly, monomer.

The protein resides in the secreted. Its subcellular location is the cytoplasm. It is found in the cytolytic granule. It localises to the early endosome. Functionally, regulates the activity of the neutrophil proteases. The protein is Leukocyte elastase inhibitor A (Serpinb1a) of Rattus norvegicus (Rat).